Here is a 193-residue protein sequence, read N- to C-terminus: Ganglioside GM2 activator (193 aa).

A signal peptide spans 1–20 (MHRLPLLLLLGLLLAGSVAP). Disulfide bonds link C39-C183, C99-C106, C112-C138, and C125-C136. N151 carries an N-linked (GlcNAc...) asparagine glycan.

As to expression, widely expressed. Most abundant in kidney and testis.

The protein resides in the lysosome. It catalyses the reaction cholesterol(in) = cholesterol(out). Binds gangliosides and stimulates ganglioside GM2 degradation. It stimulates only the breakdown of ganglioside GM2 and glycolipid GA2 by beta-hexosaminidase A. It extracts single GM2 molecules from membranes and presents them in soluble form to beta-hexosaminidase A for cleavage of N-acetyl-D-galactosamine and conversion to GM3. The large binding pocket can accommodate several single chain phospholipids and fatty acids, GM2A also exhibits some calcium-independent phospholipase activity. Has cholesterol transfer activity. This Mus musculus (Mouse) protein is Ganglioside GM2 activator.